Consider the following 285-residue polypeptide: uncharacterized protein (285 aa).

The next 7 membrane-spanning stretches (helical) occupy residues 6 to 26 (YLVV…TPLI), 38 to 58 (VFAA…YIFP), 84 to 104 (IFLL…IFLR), 110 to 130 (GVLA…ELIF), 153 to 173 (FMMH…DDGF), 176 to 196 (ISFF…ALMV), and 236 to 256 (LIFG…TVLV).

It localises to the cell membrane. This is an uncharacterized protein from Mycoplasma pneumoniae (strain ATCC 29342 / M129 / Subtype 1) (Mycoplasmoides pneumoniae).